Reading from the N-terminus, the 445-residue chain is 3-phosphoshikimate 1-carboxyvinyltransferase (445 aa).

A disordered region spans residues 1 to 20 (MSTSAAPTPLESRASGPLSG). Positions 28, 29, and 33 each coordinate 3-phosphoshikimate. Lysine 28 is a binding site for phosphoenolpyruvate. Residues glycine 101 and arginine 129 each contribute to the phosphoenolpyruvate site. 3-phosphoshikimate-binding residues include serine 175, glutamine 177, aspartate 328, and lysine 355. Glutamine 177 serves as a coordination point for phosphoenolpyruvate. Aspartate 328 (proton acceptor) is an active-site residue. Arginine 359 and arginine 402 together coordinate phosphoenolpyruvate.

The protein belongs to the EPSP synthase family. As to quaternary structure, monomer.

It is found in the cytoplasm. It catalyses the reaction 3-phosphoshikimate + phosphoenolpyruvate = 5-O-(1-carboxyvinyl)-3-phosphoshikimate + phosphate. Its pathway is metabolic intermediate biosynthesis; chorismate biosynthesis; chorismate from D-erythrose 4-phosphate and phosphoenolpyruvate: step 6/7. Its function is as follows. Catalyzes the transfer of the enolpyruvyl moiety of phosphoenolpyruvate (PEP) to the 5-hydroxyl of shikimate-3-phosphate (S3P) to produce enolpyruvyl shikimate-3-phosphate and inorganic phosphate. In Bradyrhizobium sp. (strain ORS 278), this protein is 3-phosphoshikimate 1-carboxyvinyltransferase.